We begin with the raw amino-acid sequence, 234 residues long: Ribonuclease Trv (234 aa).

5 disulfides stabilise this stretch: cysteine 5/cysteine 24, cysteine 13/cysteine 59, cysteine 23/cysteine 125, cysteine 67/cysteine 117, and cysteine 189/cysteine 224. Residue asparagine 15 is glycosylated (N-linked (GlcNAc...) asparagine). Histidine 52 is a catalytic residue. A glycan (N-linked (GlcNAc...) asparagine) is linked at asparagine 75. Active-site residues include glutamate 110 and histidine 114.

This sequence belongs to the RNase T2 family.

It catalyses the reaction a ribonucleotidyl-ribonucleotide-RNA + H2O = a 3'-end 3'-phospho-ribonucleotide-RNA + a 5'-end dephospho-ribonucleoside-RNA + H(+). Functionally, this is a base non-specific and adenylic acid preferential ribonuclease. The protein is Ribonuclease Trv of Hypocrea rufa (Trichoderma viride).